The following is a 60-amino-acid chain: Pepsin A (60 aa).

The propeptide at 1 to 45 (FIIKVPLVKKKSLRKNLKEHGLLKDFLKKHSPNPASKYFPQEAAV) is activation peptide.

Belongs to the peptidase A1 family.

It is found in the secreted. The enzyme catalyses Preferential cleavage: hydrophobic, preferably aromatic, residues in P1 and P1' positions. Cleaves 1-Phe-|-Val-2, 4-Gln-|-His-5, 13-Glu-|-Ala-14, 14-Ala-|-Leu-15, 15-Leu-|-Tyr-16, 16-Tyr-|-Leu-17, 23-Gly-|-Phe-24, 24-Phe-|-Phe-25 and 25-Phe-|-Tyr-26 bonds in the B chain of insulin.. Its function is as follows. Shows particularly broad specificity; although bonds involving phenylalanine and leucine are preferred, many others are also cleaved to some extent. In Ursus thibetanus (Asiatic black bear), this protein is Pepsin A (PGA).